A 265-amino-acid chain; its full sequence is NAD kinase 1 (265 aa).

Catalysis depends on Asp-45, which acts as the Proton acceptor. Residues 45–46 (DG), 122–123 (NE), Arg-148, Asp-150, and Ala-185 each bind NAD(+).

Belongs to the NAD kinase family. A divalent metal cation is required as a cofactor.

It localises to the cytoplasm. The enzyme catalyses NAD(+) + ATP = ADP + NADP(+) + H(+). In terms of biological role, involved in the regulation of the intracellular balance of NAD and NADP, and is a key enzyme in the biosynthesis of NADP. Catalyzes specifically the phosphorylation on 2'-hydroxyl of the adenosine moiety of NAD to yield NADP. This chain is NAD kinase 1, found in Bacillus anthracis.